The primary structure comprises 329 residues: Phospho-N-acetylmuramoyl-pentapeptide-transferase (329 aa).

Transmembrane regions (helical) follow at residues 1-21, 53-73, 76-96, 109-129, 141-161, 175-195, 198-218, 237-257, and 309-329; these read MLLNGIVAAVITMIITIIGIP, MGGFVFVVVSLVVSLVAALVF, FSPAFITAWWVFAMYAVIGFL, GLTAKQKMLAQILIGIVSYFI, ILSWQVNIGIFFSIFIIIWLV, GLASITVAISLTAYAVIAVVH, YDVLLIILSVIGGLLGFFVFN, FLAIVSILLHAEWTLLLIGAV, and IVFWLFTAVLSVIALCIYFAF.

Belongs to the glycosyltransferase 4 family. MraY subfamily. Mg(2+) is required as a cofactor.

Its subcellular location is the cell membrane. It carries out the reaction UDP-N-acetyl-alpha-D-muramoyl-L-alanyl-gamma-D-glutamyl-L-lysyl-D-alanyl-D-alanine + di-trans,octa-cis-undecaprenyl phosphate = Mur2Ac(oyl-L-Ala-gamma-D-Glu-L-Lys-D-Ala-D-Ala)-di-trans,octa-cis-undecaprenyl diphosphate + UMP. It participates in cell wall biogenesis; peptidoglycan biosynthesis. Catalyzes the initial step of the lipid cycle reactions in the biosynthesis of the cell wall peptidoglycan: transfers peptidoglycan precursor phospho-MurNAc-pentapeptide from UDP-MurNAc-pentapeptide onto the lipid carrier undecaprenyl phosphate, yielding undecaprenyl-pyrophosphoryl-MurNAc-pentapeptide, known as lipid I. This Lactococcus lactis subsp. cremoris (strain SK11) protein is Phospho-N-acetylmuramoyl-pentapeptide-transferase.